We begin with the raw amino-acid sequence, 780 residues long: Striatin (780 aa).

The stretch at 53–120 (LHFLQHEWAR…QERAKYHKLK (68 aa)) forms a coiled coil. Residues 55-63 (FLQHEWARF) are caveolin-binding. The tract at residues 123-150 (TELNQGDMKPPSYDSDEGNETEVQPQQN) is disordered. S137 is modified (phosphoserine). Residues 149 to 166 (QNSQLMWKQGRQLLRQYL) form a calmodulin-binding region. T225 bears the Phosphothreonine mark. Phosphoserine occurs at positions 227, 229, 245, and 259. 3 disordered regions span residues 289–312 (DFLV…DWEK), 334–353 (EQYK…NRSK), and 364–392 (VDEL…ELSR). The span at 299–312 (NESRSAGDGTDWEK) shows a compositional bias: basic and acidic residues. Residues 338 to 351 (KERKGKKGVKRPNR) show a composition bias toward basic residues. WD repeat units lie at residues 461–500 (SHFD…PAKK), 514–553 (AHKG…VDPY), 567–606 (GHTD…PALS), 662–701 (SSSC…LIHS), 704–743 (AHLE…CIQE), and 750–780 (KFEE…KVFV).

The protein belongs to the WD repeat striatin family. In terms of assembly, part of the core of STRIPAK complexes composed of PP2A catalytic and scaffolding subunits, the striatins (PP2A regulatory subunits), the striatin-associated proteins MOB4, STRIP1 and STRIP2, PDCD10 and members of the STE20 kinases, such as STK24 and STK26. Interacts with CTTNBP2; this interaction may regulate dendritic spine distribution of STRN. Activation of glutamate receptors weakens the interaction with CTTNBP2. In terms of tissue distribution, mainly expressed in brain but is also expressed at low levels in various tissues such as kidney, spleen, skeletal muscle and lung.

Its subcellular location is the cytoplasm. The protein localises to the membrane. It localises to the cell projection. It is found in the dendritic spine. Calmodulin-binding scaffolding protein which is the center of the striatin-interacting phosphatase and kinase (STRIPAK) complexes. STRIPAK complexes have critical roles in protein (de)phosphorylation and are regulators of multiple signaling pathways including Hippo, MAPK, nuclear receptor and cytoskeleton remodeling. Different types of STRIPAK complexes are involved in a variety of biological processes such as cell growth, differentiation, apoptosis, metabolism and immune regulation. The polypeptide is Striatin (Strn) (Mus musculus (Mouse)).